Here is a 171-residue protein sequence, read N- to C-terminus: Ribosome maturation factor RimP (171 aa).

It belongs to the RimP family.

The protein localises to the cytoplasm. Required for maturation of 30S ribosomal subunits. In Anaeromyxobacter sp. (strain K), this protein is Ribosome maturation factor RimP.